A 138-amino-acid polypeptide reads, in one-letter code: Acidic phospholipase A2 Ts-A3 (138 aa).

Positions 1–16 (MRTLWIMAVLLLGVEG) are cleaved as a signal peptide. 7 disulfides stabilise this stretch: Cys42–Cys132, Cys44–Cys60, Cys59–Cys111, Cys65–Cys138, Cys66–Cys104, Cys73–Cys97, and Cys91–Cys102. Tyr43, Gly45, and Gly47 together coordinate Ca(2+). The active site involves His63. Position 64 (Asp64) interacts with Ca(2+). Asp105 is a catalytic residue.

It depends on Ca(2+) as a cofactor. In terms of tissue distribution, expressed by the venom gland.

It is found in the secreted. The catalysed reaction is a 1,2-diacyl-sn-glycero-3-phosphocholine + H2O = a 1-acyl-sn-glycero-3-phosphocholine + a fatty acid + H(+). Its function is as follows. Snake venom phospholipase A2 (PLA2) that shows a moderate inhibition of ADP-induced human platelet aggregation when tested on platelet rich plasma. Exhibits high hydrolytic activities and prefers the anionic micelles (dPPC with deoxycholate) to the zwitterionic micelles (dPPC with Triton X-100). PLA2 catalyzes the calcium-dependent hydrolysis of the 2-acyl groups in 3-sn-phosphoglycerides. The chain is Acidic phospholipase A2 Ts-A3 from Trimeresurus stejnegeri (Chinese green tree viper).